The chain runs to 366 residues: Protein CbrA (366 aa).

This sequence belongs to the CbrA family.

This chain is Protein CbrA (cbrA), found in Escherichia coli O9:H4 (strain HS).